A 206-amino-acid polypeptide reads, in one-letter code: FMN-dependent NADH:quinone oxidoreductase 2 (206 aa).

FMN-binding positions include Ser10, 16 to 18, and 140 to 143; these read SYS and SCGG.

It belongs to the azoreductase type 1 family. Homodimer. It depends on FMN as a cofactor.

The enzyme catalyses 2 a quinone + NADH + H(+) = 2 a 1,4-benzosemiquinone + NAD(+). The catalysed reaction is N,N-dimethyl-1,4-phenylenediamine + anthranilate + 2 NAD(+) = 2-(4-dimethylaminophenyl)diazenylbenzoate + 2 NADH + 2 H(+). In terms of biological role, quinone reductase that provides resistance to thiol-specific stress caused by electrophilic quinones. Its function is as follows. Also exhibits azoreductase activity. Catalyzes the reductive cleavage of the azo bond in aromatic azo compounds to the corresponding amines. This Cupriavidus pinatubonensis (strain JMP 134 / LMG 1197) (Cupriavidus necator (strain JMP 134)) protein is FMN-dependent NADH:quinone oxidoreductase 2.